Reading from the N-terminus, the 307-residue chain is MKLTIATALASILLIGSANVANCCDCGCPTTTTTCAPRTTQPPCTTTTTTTTTTCAPPTQQSTTQPPCTTSKPTTPKQTTTQLPCTTPTTTKATTTKPTTTKATTTKATTTKPTTTKQTTTQLPCTTPTTTKQTTTQLPCTTPTTTKPTTTKPTTTKPTTTKPTTTKPTTTKPTTTKPTTTKPTTTKPTTTKPTTTKPTTTKPTTTKPTTTKPTTTKPTTTKPTTTKPTTTKPTTTKPTTTKPTTTKPTTTKPTTPKPCGCKSCGPGGEPCNGCAKRDALCQDLNGVLRNLERKIRQCVCGEPQWLL.

The first 23 residues, Met-1–Cys-23, serve as a signal peptide directing secretion. Residues Ala-56 to Lys-257 form a disordered region.

In terms of processing, O-glycosylated by Pgnat9 in salivary glands. As to expression, specifically expressed in the salivary gland.

Its subcellular location is the secreted. The protein is Salivary glue protein Sgs-3 of Drosophila melanogaster (Fruit fly).